A 342-amino-acid chain; its full sequence is DNA primase (342 aa).

Residues Cys37, Cys40, Cys65, and Cys68 each contribute to the Zn(2+) site.

It belongs to the Tequatrovirus DNA primase family. Monomer. Hexamer. Interacts with the DnaB-like replicative helicase; this interaction forms the active primosome complex, which is composed of 6 helicase and 1 primase subunits and expresses full helicase and primase activities. Interacts (via C-terminus) with the single-stranded DNA-binding protein. Part of the replicase complex that includes the DNA polymerase, the polymerase clamp, the clamp loader complex, the single-stranded DNA binding protein, the primase, the DnaB-like replicative helicase and the helicase assembly factor.

Synthesizes short RNA primers for the lagging strand DNA replication. The primase synthesizes short RNA primers on the lagging strand that the polymerase elongates using dNTPs. Recognizes two trinucleotide sequences 5'-GTT-3' and 5'-GCT-3' in vitro, but uses only the first as the priming site in vivo. The polypeptide is DNA primase (61) (Escherichia coli (Bacteriophage T4)).